Reading from the N-terminus, the 1551-residue chain is Serine/threonine-protein kinase MRCK gamma (1551 aa).

The Protein kinase domain maps to 71-337 (FEILKVIGRG…LDDFRNHPFF (267 aa)). Residues 77 to 85 (IGRGAFGEV) and Lys100 contribute to the ATP site. Residue Asp195 is the Proton acceptor of the active site. Ser216 and Ser228 each carry phosphoserine; by autocatalysis. Thr234 bears the Phosphothreonine; by autocatalysis mark. The AGC-kinase C-terminal domain maps to 338–408 (EGVDWERLAS…TSGSHSPESS (71 aa)). Coiled-coil stretches lie at residues 406–678 (ESSS…SNWE) and 730–802 (KARR…RARG). Disordered stretches follow at residues 467–486 (KASL…QDSD), 655–675 (ELAQ…ETES), 801–849 (RGPV…PEGR), and 863–886 (TANT…PRSF). A compositionally biased stretch (basic and acidic residues) spans 655 to 674 (ELAQEQESKQRLEGERRETE). The span at 835–849 (ATRHGGEPDLRPEGR) shows a compositional bias: basic and acidic residues. A Phorbol-ester/DAG-type zinc finger spans residues 878 to 927 (SHTLRPRSFPSPTKCLRCTSLMLGLGRQGLGCDACGYFCHTTCAPQAPPC). The PH domain maps to 947–1066 (GTAYEGFLSV…WLQVLGELQR (120 aa)). In terms of domain architecture, CNH spans 1092–1366 (LPHTLCAAIL…RPLNPEGSLF (275 aa)). The region spanning 1437 to 1450 (ISPPTNFNHLVHVG) is the CRIB domain. The segment at 1442–1551 (NFNHLVHVGP…PLSPELESSP (110 aa)) is disordered. The segment covering 1457–1470 (GARDKSPAPEEKGR) has biased composition (basic and acidic residues). A Phosphoserine modification is found at Ser1482. Over residues 1511-1533 (TSLSSESVSCPQGSLSPATSLMQ) the composition is skewed to polar residues. Positions 1540 to 1551 (SLPLSPELESSP) are enriched in low complexity.

The protein belongs to the protein kinase superfamily. AGC Ser/Thr protein kinase family. DMPK subfamily. Homodimer and homotetramer via the coiled coil regions. Interacts tightly with GTP-bound but not GDP-bound CDC42. It depends on Mg(2+) as a cofactor. As to expression, expressed in heart and skeletal muscle.

The protein resides in the cytoplasm. It carries out the reaction L-seryl-[protein] + ATP = O-phospho-L-seryl-[protein] + ADP + H(+). The catalysed reaction is L-threonyl-[protein] + ATP = O-phospho-L-threonyl-[protein] + ADP + H(+). Its activity is regulated as follows. Maintained in an inactive, closed conformation by an interaction between the kinase domain and the negative autoregulatory C-terminal coiled-coil region. Agonist binding to the phorbol ester binding site disrupts this, releasing the kinase domain to allow N-terminus-mediated dimerization and kinase activation by transautophosphorylation. In terms of biological role, may act as a downstream effector of CDC42 in cytoskeletal reorganization. Contributes to the actomyosin contractility required for cell invasion, through the regulation of MYPT1 and thus MLC2 phosphorylation. This is Serine/threonine-protein kinase MRCK gamma from Homo sapiens (Human).